The following is a 57-amino-acid chain: UPF0391 membrane protein XC_2938 (57 aa).

2 helical membrane passes run 4–24 (WAII…GGMA) and 33–53 (FLFW…MTIA).

Belongs to the UPF0391 family.

The protein localises to the cell membrane. This chain is UPF0391 membrane protein XC_2938, found in Xanthomonas campestris pv. campestris (strain 8004).